The sequence spans 346 residues: Peripherin-2 (346 aa).

Residues 1–24 (MALMKTKFNLKRRVKLAQGLWLMN) lie on the Cytoplasmic side of the membrane. A helical transmembrane segment spans residues 25–43 (WCCVLAGIALFSMGVFLKI). Residues 44-61 (ELRKRSEVMDNDESHFVP) are Lumenal-facing. A helical transmembrane segment spans residues 62-80 (NSLILMGSLACALNAFPGK). The Cytoplasmic segment spans residues 81-99 (ICYDSLDPTKFPRWKPMLK). The chain crosses the membrane as a helical span at residues 100-123 (PYLIICLIFNIFIFFTGVVCFLTR). Residues 124–264 (GSLESTLAHG…LNYYTSMMSS (141 aa)) lie on the Lumenal side of the membrane. N-linked (GlcNAc...) asparagine glycosylation is present at Asn-229. Residues 265 to 290 (MGGMVFLVWIMEMAVMIGLRFLHTCL) traverse the membrane as a helical segment. At 291-346 (ETIANPEDPECESEGWILEKSLKDTIKSSWELVKSMGKLNKVETAGGEEAGVATVS) the chain is on the cytoplasmic side.

This sequence belongs to the PRPH2/ROM1 family. As to quaternary structure, homodimer; disulfide-linked. Found in both rod and cone photoreceptors. Specifically in the rims and incisures of rod and cone outer segment disks.

The protein localises to the membrane. Its function is as follows. May be involved in the morphogenesis of retina outer segment disks and the development and maintenance of the retina ultrastructure. This is Peripherin-2 (prph2) from Xenopus laevis (African clawed frog).